The primary structure comprises 220 residues: Large ribosomal subunit protein bL9 (220 aa).

Over residues 167–184 the composition is skewed to low complexity; sequence AAAEVEQAEDVAAAEQQD. The tract at residues 167 to 220 is disordered; the sequence is AAAEVEQAEDVAAAEQQDSSPVDDHADDADGVADGEGRDEGAGDASDEEEMPST. Positions 211 to 220 are enriched in acidic residues; sequence ASDEEEMPST.

It belongs to the bacterial ribosomal protein bL9 family.

Functionally, binds to the 23S rRNA. This chain is Large ribosomal subunit protein bL9, found in Anaplasma marginale (strain Florida).